The sequence spans 446 residues: 3-phosphoshikimate 1-carboxyvinyltransferase (446 aa).

The segment at 1–20 (MSTWPAPSTATPVHATVTVP) is disordered. The 3-phosphoshikimate site is built by Lys-23, Ser-24, and Arg-28. Lys-23 lines the phosphoenolpyruvate pocket. Gly-100 and Arg-128 together coordinate phosphoenolpyruvate. 3-phosphoshikimate-binding residues include Ser-171, Ser-172, Gln-173, Ser-200, Glu-315, and His-344. Phosphoenolpyruvate is bound at residue Gln-173. Glu-315 acts as the Proton acceptor in catalysis. Phosphoenolpyruvate-binding residues include Arg-348, Arg-389, and Lys-414.

Belongs to the EPSP synthase family. As to quaternary structure, monomer.

Its subcellular location is the cytoplasm. The enzyme catalyses 3-phosphoshikimate + phosphoenolpyruvate = 5-O-(1-carboxyvinyl)-3-phosphoshikimate + phosphate. The protein operates within metabolic intermediate biosynthesis; chorismate biosynthesis; chorismate from D-erythrose 4-phosphate and phosphoenolpyruvate: step 6/7. Functionally, catalyzes the transfer of the enolpyruvyl moiety of phosphoenolpyruvate (PEP) to the 5-hydroxyl of shikimate-3-phosphate (S3P) to produce enolpyruvyl shikimate-3-phosphate and inorganic phosphate. The chain is 3-phosphoshikimate 1-carboxyvinyltransferase from Mycolicibacterium vanbaalenii (strain DSM 7251 / JCM 13017 / BCRC 16820 / KCTC 9966 / NRRL B-24157 / PYR-1) (Mycobacterium vanbaalenii).